The sequence spans 436 residues: GTPase Der (436 aa).

EngA-type G domains lie at 4–165 (NVIA…NFDS) and 172–347 (FKLS…ENLE). Residues 10 to 17 (GKPNVGKS), 57 to 61 (DTGGI), 119 to 122 (NKLD), 178 to 185 (GQPNSGKS), 225 to 229 (DTAGI), and 290 to 293 (NKWD) contribute to the GTP site. In terms of domain architecture, KH-like spans 348–432 (REIKPSVLTN…PINIIFKNKS (85 aa)).

It belongs to the TRAFAC class TrmE-Era-EngA-EngB-Septin-like GTPase superfamily. EngA (Der) GTPase family. In terms of assembly, associates with the 50S ribosomal subunit.

GTPase that plays an essential role in the late steps of ribosome biogenesis. This chain is GTPase Der, found in Mycoplasmopsis agalactiae (strain NCTC 10123 / CIP 59.7 / PG2) (Mycoplasma agalactiae).